Consider the following 2517-residue polypeptide: Protein capicua homolog (2517 aa).

Disordered stretches follow at residues 1–197 (MKPM…SGSY), 300–325 (LSPGPSSQPGLPGSLPQPPQPLHREP), 342–483 (PWEP…KYKK), 531–579 (EMEG…RGDS), 608–640 (SSRSGTPSFSPVSTQSPFSPAPSPSPSPLFGFR), and 658–767 (VRSR…FRAV). The segment covering 57 to 67 (EEAEEGEEEEA) has biased composition (acidic residues). The span at 91-101 (EDPKGDGEAGR) shows a compositional bias: basic and acidic residues. Composition is skewed to low complexity over residues 158–167 (TSTRSSSTDT) and 300–313 (LSPGPSSQPGLPGS). Residues 396–405 (HCEEGEEKHP) are compositionally biased toward basic and acidic residues. Over residues 414-428 (LPLPPPQLLSPPPKS) the composition is skewed to pro residues. Residues 451-477 (GSRSSSVASLEKGTAPAARARTPLTAA) are compositionally biased toward low complexity. A compositionally biased stretch (polar residues) spans 608–619 (SSRSGTPSFSPV). Pro residues predominate over residues 677 to 686 (DLGPHPPPPA). Positions 698–707 (TFQTNLTFTV) are enriched in polar residues. The span at 726–735 (GAPGAGGGGA) shows a compositional bias: gly residues. Phosphoserine occurs at positions 776 and 780. Disordered stretches follow at residues 812 to 842 (IVRNPDVPLPSKFPGEVGTAGEVRAGGPGRG), 955 to 1110 (PSQP…DHIR), 1179 to 1220 (CNKD…APGV), 1235 to 1274 (SDTKAPGSSSCGAERLHTVGGPGSARPRAFSHSGVHSLDG), 1290 to 1347 (SGPA…TSDE), 1379 to 1539 (RVTD…ILQT), and 1595 to 1628 (IASKPFPTSGRAEASPNDTAGARTEMGTGSRVPG). Residues 937–955 (EPRSVAVFPWHSLVPFLAP) are interaction with ATXN1. The span at 959-981 (DPSVQPSEAQQPASHPVASNQSK) shows a compositional bias: polar residues. A phosphoserine mark is found at serine 1055 and serine 1082. Composition is skewed to basic and acidic residues over residues 1087 to 1110 (PKERDSSSEKDGRSPNKREKDHIR), 1179 to 1188 (CNKDRKKSSS), and 1200 to 1209 (GHKETRERSM). At arginine 1099 the chain carries Omega-N-methylarginine. The HMG box DNA-binding region spans 1109-1177 (IRRPMNAFMI…AHFKAHPDWK (69 aa)). Position 1186 is a phosphoserine (serine 1186). Residues 1235–1245 (SDTKAPGSSSC) show a composition bias toward polar residues. Serine 1271 carries the post-translational modification Phosphoserine. Residues 1305–1323 (GAPGPFAAPGEGGALAATG) are compositionally biased toward low complexity. Serine 1340, serine 1345, and serine 1405 each carry phosphoserine. The segment covering 1418–1430 (PLDPEPPGPPDPP) has biased composition (pro residues). Over residues 1439 to 1456 (SAPSSSASSPASSSASAA) the composition is skewed to low complexity. The segment covering 1457–1474 (TSFSLGSGTFKAQESGQG) has biased composition (polar residues). Phosphoserine occurs at positions 1609, 1630, and 1648. At arginine 1772 the chain carries Asymmetric dimethylarginine. The interval 1799-1818 (QSVPSAPPPKAQSVSPVQAP) is disordered. Arginine 1843 carries the post-translational modification Omega-N-methylarginine. Disordered regions lie at residues 2039 to 2064 (AATILPKGPPAPATATPAPTSPFPSA), 2100 to 2342 (SFEA…AKCE), and 2430 to 2517 (AATP…ATGR). Residues 2051 to 2064 (ATATPAPTSPFPSA) show a composition bias toward low complexity. 2 stretches are compositionally biased toward pro residues: residues 2110-2119 (GPAPRQPLEP) and 2136-2145 (PTPPAPPPLP). Over residues 2146-2155 (ETWTPTARSS) the composition is skewed to low complexity. Lysine 2177 is subject to N6-acetyllysine. Over residues 2198-2209 (PPTPPSPAPAPA) the composition is skewed to pro residues. Residue threonine 2200 is modified to Phosphothreonine. At serine 2203 the chain carries Phosphoserine. Over residues 2210 to 2225 (VAPGGSSESSSGRAAG) the composition is skewed to low complexity. Over residues 2249–2278 (KTFDSVDNRVLSEVDFEERFAELPEFRPEE) the composition is skewed to basic and acidic residues. A phosphoserine mark is found at serine 2260, serine 2282, serine 2287, serine 2291, serine 2298, and serine 2306. The residue at position 2307 (threonine 2307) is a Phosphothreonine. Phosphoserine is present on residues serine 2311 and serine 2318. Positions 2457–2469 (APTPSPAGGPDPT) are enriched in pro residues. Serine 2504 is modified (phosphoserine).

Found in a complex with ATXN1 and ATXN1L. In terms of assembly, interacts with ATXN1. As to expression, expressed in fetal brain.

The protein resides in the nucleus. Functionally, transcriptional repressor which plays a role in development of the central nervous system (CNS). In concert with ATXN1 and ATXN1L, involved in brain development. The sequence is that of Protein capicua homolog (CIC) from Homo sapiens (Human).